The following is a 198-amino-acid chain: MPFYFRKECPLNSGYLRKNRPEKPDGRRAVLRSQVLELHGISHGSAGARSIATMATRRGYQMGRWLAGRLMKELGLVSCQQPTHRYKRGGHEHVAIPNYLERQFAVTEPNQVWCGDVTYIWTGKRWAYLAVVLDLFARKPVGWAMSFSPDSRLTMKALEMAWETRGKPVGVMFQAIKAVIIRAGSSGSYCGDTGSGRV.

One can recognise an Integrase catalytic domain in the interval 105-198; sequence AVTEPNQVWC…YCGDTGSGRV (94 aa).

Its function is as follows. Involved in the transposition of the insertion sequence IS911B. This is Putative transposase InsO for insertion sequence element IS911B (insO2) from Escherichia coli (strain K12).